A 169-amino-acid chain; its full sequence is MAEHQVNYTQNNGLPIVLSSVDKLLNWSRSNSLWGVTYGLACCAIEMMATGGSRFDLDRFGSIFRASPRQSDLMIISGTVTKKHAEFVRRLYDQMPEPKWVISMGSCANTGGMFNTYATVQGVDRIIPVDIYLPGCAPRPETLQYAIMVLQQKIRRQKALPHLKPKRLI.

Residues Cys42, Cys43, Cys107, and Cys136 each coordinate [4Fe-4S] cluster.

This sequence belongs to the complex I 20 kDa subunit family. NDH-1 is composed of 14 different subunits. Subunits NuoB, C, D, E, F, and G constitute the peripheral sector of the complex. [4Fe-4S] cluster serves as cofactor.

The protein localises to the cell inner membrane. It carries out the reaction a quinone + NADH + 5 H(+)(in) = a quinol + NAD(+) + 4 H(+)(out). NDH-1 shuttles electrons from NADH, via FMN and iron-sulfur (Fe-S) centers, to quinones in the respiratory chain. The immediate electron acceptor for the enzyme in this species is believed to be ubiquinone. Couples the redox reaction to proton translocation (for every two electrons transferred, four hydrogen ions are translocated across the cytoplasmic membrane), and thus conserves the redox energy in a proton gradient. The protein is NADH-quinone oxidoreductase subunit B of Helicobacter hepaticus (strain ATCC 51449 / 3B1).